The primary structure comprises 162 residues: Nucleotide-binding protein CMM_2802 (162 aa).

It belongs to the YajQ family.

Its function is as follows. Nucleotide-binding protein. This chain is Nucleotide-binding protein CMM_2802, found in Clavibacter michiganensis subsp. michiganensis (strain NCPPB 382).